An 827-amino-acid polypeptide reads, in one-letter code: N-terminal kinase-like protein (827 aa).

The 309-residue stretch at 1–309 folds into the Protein kinase domain; it reads MWFWSRDPAR…PEDFCRHKIL (309 aa). 3 HEAT repeats span residues 345–383, 384–422, and 502–540; these read IIPV…VNAQ, IFPH…LNME, and VLPV…EDPS. The span at 586–624 shows a compositional bias: low complexity; sequence DAAASEGASAPSTASEASKPDTAPSSSAPPAAASTAPTS. The segment at 586-827 is disordered; sequence DAAASEGASA…PLKLGVRKLD (242 aa). Positions 630–640 are enriched in basic and acidic residues; the sequence is EKGAPDNSLDR. The span at 641 to 652 shows a compositional bias: acidic residues; sequence WDDEDWGSLEDA. The span at 667-678 shows a compositional bias: basic and acidic residues; that stretch reads DWGHGKTQEKTV. Polar residues-rich tracts occupy residues 679-690 and 737-746; these read DFSSSRSKTKQV and NWDTSGSSGR. The span at 774-783 shows a compositional bias: acidic residues; it reads GGDDNWESVE. Positions 788-817 form a coiled coil; the sequence is LSKAEMARKKREERQKEIEAKRAERRAAKG. Residues 792-814 show a composition bias toward basic and acidic residues; it reads EMARKKREERQKEIEAKRAERRA.

The protein belongs to the protein kinase superfamily.

Functionally, regulates COPI-mediated retrograde protein traffic at the interface between the Golgi apparatus and the endoplasmic reticulum. Involved in the maintenance of the Golgi apparatus morphology. The polypeptide is N-terminal kinase-like protein (scyl1) (Xenopus tropicalis (Western clawed frog)).